The primary structure comprises 460 residues: Argininosuccinate lyase (460 aa).

The protein belongs to the lyase 1 family. Argininosuccinate lyase subfamily.

Its subcellular location is the cytoplasm. It carries out the reaction 2-(N(omega)-L-arginino)succinate = fumarate + L-arginine. Its pathway is amino-acid biosynthesis; L-arginine biosynthesis; L-arginine from L-ornithine and carbamoyl phosphate: step 3/3. The protein is Argininosuccinate lyase of Streptococcus uberis (strain ATCC BAA-854 / 0140J).